A 117-amino-acid chain; its full sequence is MPRVKRGVTSQARHKKVLKAAKGYTGRNNSCFRIAKQKVEKGLQYAYRDRKNLKREMRRLWIARINAATRLHGMSYSQFMNGLNKAGIELDRKVLSELAISEPESFGTLVEQAKAAL.

It belongs to the bacterial ribosomal protein bL20 family.

Functionally, binds directly to 23S ribosomal RNA and is necessary for the in vitro assembly process of the 50S ribosomal subunit. It is not involved in the protein synthesizing functions of that subunit. The protein is Large ribosomal subunit protein bL20 of Magnetococcus marinus (strain ATCC BAA-1437 / JCM 17883 / MC-1).